The sequence spans 501 residues: L-arabinose isomerase (501 aa).

Mn(2+) contacts are provided by Glu306, Glu333, His350, and His450.

This sequence belongs to the arabinose isomerase family. Homohexamer. Mn(2+) serves as cofactor.

The catalysed reaction is beta-L-arabinopyranose = L-ribulose. It participates in carbohydrate degradation; L-arabinose degradation via L-ribulose; D-xylulose 5-phosphate from L-arabinose (bacterial route): step 1/3. Its function is as follows. Catalyzes the conversion of L-arabinose to L-ribulose. This is L-arabinose isomerase from Erwinia tasmaniensis (strain DSM 17950 / CFBP 7177 / CIP 109463 / NCPPB 4357 / Et1/99).